Consider the following 235-residue polypeptide: Protein shisa-5 (235 aa).

The N-terminal stretch at 1-26 (MAAPAPSLWTLLLLLLLLPPPPGAHG) is a signal peptide. Residues 27–105 (ELCRPFGEDN…SSFDSDPMSG (79 aa)) lie on the Extracellular side of the membrane. A helical transmembrane segment spans residues 106-126 (FGATVAIGVTIFVVFIATIII). Over 127–235 (CFTCSCCCLY…TYMDSLKTIP (109 aa)) the chain is Cytoplasmic. The disordered stretch occupies residues 157–235 (APYPQPQPQP…TYMDSLKTIP (79 aa)). Composition is skewed to pro residues over residues 159-172 (YPQP…PSYP) and 181-211 (PMPP…PPPY).

It belongs to the shisa family. As to quaternary structure, interacts with PDCD6; PDCD6 can stabilize SHISA5. In terms of tissue distribution, spleen and thymus.

The protein resides in the endoplasmic reticulum membrane. Its subcellular location is the nucleus membrane. In terms of biological role, can induce apoptosis in a caspase-dependent manner and plays a role in p53/TP53-dependent apoptosis. The chain is Protein shisa-5 (Shisa5) from Mus musculus (Mouse).